We begin with the raw amino-acid sequence, 246 residues long: MAGHSKWHNIQHRKGAQDAKRGKIFTKLIKEIVISAKIGGGRIENNHSLKIIIDKALAVNMRRNTIENAVKRGNGDFDGNNYEKIRYEGYSLGGTAIMVDCLSDNRNRTISDIRHAFLKHGGNLGRDGSVSYLFTKQGFISFDTGNENQIMEIALDEGAQDIITNDDDSIDVITTPEDFFTIKDVLTTSGLEPSHAEVTMEPASRVELNLSDAEKFMKLIDHLEDLDETKKIYHNADISDKVMVRL.

Belongs to the TACO1 family.

It is found in the cytoplasm. This is Probable transcriptional regulatory protein Rmag_0394 from Ruthia magnifica subsp. Calyptogena magnifica.